Here is a 394-residue protein sequence, read N- to C-terminus: Metal tolerance protein 11 (394 aa).

Over Met-1–Thr-103 the chain is Cytoplasmic. The chain crosses the membrane as a helical span at residues Leu-104 to Ser-124. Topologically, residues Val-125 to Leu-130 are vacuolar. The chain crosses the membrane as a helical span at residues Ala-131–Phe-151. The Cytoplasmic portion of the chain corresponds to Thr-152 to Gln-172. The helical transmembrane segment at Pro-173–Glu-193 threads the bilayer. Over Ser-194–Glu-212 the chain is Vacuolar. Residues Ser-213 to Cys-233 form a helical membrane-spanning segment. The Cytoplasmic segment spans residues Arg-234–Asp-251. A helical transmembrane segment spans residues Val-252–Ile-272. Residue Asp-273 is a topological domain, vacuolar. The chain crosses the membrane as a helical span at residues Pro-274–Glu-294. Topologically, residues Asn-295–Cys-394 are cytoplasmic.

This sequence belongs to the cation diffusion facilitator (CDF) transporter (TC 2.A.4) family. SLC30A subfamily. In terms of tissue distribution, widely expressed.

Its subcellular location is the prevacuolar compartment membrane. It localises to the golgi apparatus membrane. Functionally, cation/proton antiporter involved in endogenous manganese tolerance probably through vesicular trafficking and exocytosis. The protein is Metal tolerance protein 11 (MTP11) of Arabidopsis thaliana (Mouse-ear cress).